Consider the following 425-residue polypeptide: Neuromedin-U receptor 1 (425 aa).

The Extracellular segment spans residues Met1–Gln59. A glycan (N-linked (GlcNAc...) asparagine) is linked at Asn41. The chain crosses the membrane as a helical span at residues Phe60–Leu80. Residues Thr81–Asn96 are Cytoplasmic-facing. Residues Phe97–Glu117 form a helical membrane-spanning segment. The Extracellular segment spans residues Leu118 to Arg137. Cys134 and Cys219 form a disulfide bridge. The helical transmembrane segment at Ile138 to Glu158 threads the bilayer. Topologically, residues Arg159–Met181 are cytoplasmic. A helical membrane pass occupies residues Leu182–Leu202. Residues Ser203 to Thr235 are Extracellular-facing. Residues Ile236–Leu256 traverse the membrane as a helical segment. The Cytoplasmic segment spans residues Arg257–Gln294. A helical transmembrane segment spans residues Val295–Ala315. The Extracellular portion of the chain corresponds to Asp316–Arg331. A helical transmembrane segment spans residues Leu332–Asn352. Residues Pro353–Glu425 are Cytoplasmic-facing. The interval Asp406–Glu425 is disordered.

It belongs to the G-protein coupled receptor 1 family. Highly expressed in the small intestine and lung. Low expression in the central nervous system.

The protein resides in the cell membrane. In terms of biological role, receptor for the neuromedin-U and neuromedin-S neuropeptides. The polypeptide is Neuromedin-U receptor 1 (Nmur1) (Rattus norvegicus (Rat)).